We begin with the raw amino-acid sequence, 594 residues long: Fidgetin-like protein 1 (594 aa).

2 disordered regions span residues 1–79 (MYSP…DDEL) and 239–261 (QSIG…KRCS). Over residues 56–73 (PSDSAQQQPPFKSRSQQN) the composition is skewed to polar residues. ATP is bound by residues A319 and 359–364 (GTGKTM).

The protein belongs to the AAA ATPase family. Hexamer. The cofactor is Mg(2+). In terms of tissue distribution, expressed in germ cells.

It localises to the nucleus. It catalyses the reaction ATP + H2O = ADP + phosphate + H(+). Its function is as follows. Has a role in spindle assembly which acts in the progression through mitosis during embryogenesis. Required for fertility. The chain is Fidgetin-like protein 1 (figl-1) from Caenorhabditis elegans.